The chain runs to 347 residues: MSNYNNKHHDDGNPFYNEPINTSPTQQQQQQQQNLFPNTNIDYNDYTQNRGQQQQQQPAYQPDLQFQSFSHDVDVNSNTSPNNNNNNNSNNNNSNKIGGNSSNNKFSDNVPLNTNEDGTEKKYSFYEVPYYRFLFNVDTKEVGLRLIRSMLPIKFSFFNLIRENPDLYGPFWVLTSLVFIVAVTSNLNEYFHSSDHKSWEVDIQKIVYSAITIYGYSFVIPLILWGIFKWMNLGLRLLDMLCIYGYTLFIFVPASILCVIPLQLVQWIIVAIASIVSGLFLVTNIFTPLKEDFTKRGLIICAVIGALHIGLALVLKLYFFANSTENFTISDSSSTPTPTPTNTTKLL.

A disordered region spans residues 1 to 115; sequence MSNYNNKHHD…FSDNVPLNTN (115 aa). The Cytoplasmic portion of the chain corresponds to 1–166; that stretch reads MSNYNNKHHD…FFNLIRENPD (166 aa). A compositionally biased stretch (polar residues) spans 34 to 47; sequence NLFPNTNIDYNDYT. Composition is skewed to low complexity over residues 48 to 67 and 76 to 104; these read QNRG…LQFQ and NSNT…SSNN. A compositionally biased stretch (polar residues) spans 105-115; sequence KFSDNVPLNTN. A helical transmembrane segment spans residues 167-187; sequence LYGPFWVLTSLVFIVAVTSNL. Residues 188 to 207 lie on the Lumenal side of the membrane; sequence NEYFHSSDHKSWEVDIQKIV. The chain crosses the membrane as a helical span at residues 208 to 228; that stretch reads YSAITIYGYSFVIPLILWGIF. At 229 to 232 the chain is on the cytoplasmic side; the sequence is KWMN. The helical transmembrane segment at 233–253 threads the bilayer; sequence LGLRLLDMLCIYGYTLFIFVP. Over 254 to 255 the chain is Lumenal; that stretch reads AS. The chain crosses the membrane as a helical span at residues 256 to 276; the sequence is ILCVIPLQLVQWIIVAIASIV. The Cytoplasmic segment spans residues 277 to 296; sequence SGLFLVTNIFTPLKEDFTKR. Residues 297–317 form a helical membrane-spanning segment; that stretch reads GLIICAVIGALHIGLALVLKL. Residues 318–347 lie on the Lumenal side of the membrane; the sequence is YFFANSTENFTISDSSSTPTPTPTNTTKLL. N322, N326, and N342 each carry an N-linked (GlcNAc...) asparagine glycan.

It belongs to the YIP1 family.

The protein resides in the golgi apparatus. It localises to the cis-Golgi network membrane. The protein localises to the trans-Golgi network membrane. Its subcellular location is the late endosome membrane. The sequence is that of Protein YIPF1 homolog (yipf1) from Dictyostelium discoideum (Social amoeba).